The chain runs to 77 residues: uncharacterized protein (77 aa).

The Inhibitor I9 domain maps to 5–74 (SYIVQLKDSV…FEPDQEMHTM (70 aa)).

This sequence belongs to the protease inhibitor I9 family.

It is found in the cytoplasm. It localises to the nucleus. This is an uncharacterized protein from Schizosaccharomyces pombe (strain 972 / ATCC 24843) (Fission yeast).